Reading from the N-terminus, the 521-residue chain is GRAS family protein RAD1 (521 aa).

Residues 137-520 (DGSCADGMRL…KPIVAVSCWK (384 aa)) form the GRAS domain. Residues 144 to 212 (MRLVQLLIAC…PIGNNSAGSD (69 aa)) form a leucine repeat I (LRI) region. The interval 231–301 (FKLVYENCPH…HRVRRLRITA (71 aa)) is VHIID. The short motif at 262–266 (LHVVD) is the VHIID element. The leucine repeat II (LRII) stretch occupies residues 311 to 343 (VIGEELSIYAKNLGIHLEFSIVEKNLENLKPKD). Residues 352 to 443 (LVVNSILQLH…QFYFAEEIKN (92 aa)) form a PFYRE region. An SAW region spans residues 446–520 (SCEGPLRMER…KPIVAVSCWK (75 aa)).

It belongs to the GRAS family. As to quaternary structure, interacts with RAM1. Interacts with NSP2.

It is found in the nucleus. Its function is as follows. Transcription factor acting as a regulator of arbuscular mycorrhiza (AM)-related genes (e.g. STR). Required for the morphogenesis of arbuscules upon symbiosis with AM fungi (e.g. Glomus versiforme). Also involved in restricting mycorrhizal colonization of the root meristem. In Medicago truncatula (Barrel medic), this protein is GRAS family protein RAD1.